The sequence spans 259 residues: Ribosomal RNA small subunit methyltransferase J (259 aa).

Residues 101 to 102 (RD), 117 to 118 (ER), 153 to 154 (SS), and Asp-176 contribute to the S-adenosyl-L-methionine site.

Belongs to the methyltransferase superfamily. RsmJ family.

The protein localises to the cytoplasm. It carries out the reaction guanosine(1516) in 16S rRNA + S-adenosyl-L-methionine = N(2)-methylguanosine(1516) in 16S rRNA + S-adenosyl-L-homocysteine + H(+). In terms of biological role, specifically methylates the guanosine in position 1516 of 16S rRNA. The chain is Ribosomal RNA small subunit methyltransferase J from Vibrio parahaemolyticus serotype O3:K6 (strain RIMD 2210633).